The chain runs to 186 residues: Large ribosomal subunit protein uL5 (186 aa).

This sequence belongs to the universal ribosomal protein uL5 family. In terms of assembly, part of the 50S ribosomal subunit; part of the 5S rRNA/L5/L18/L25 subcomplex. Contacts the 5S rRNA and the P site tRNA. Forms a bridge to the 30S subunit in the 70S ribosome.

In terms of biological role, this is one of the proteins that bind and probably mediate the attachment of the 5S RNA into the large ribosomal subunit, where it forms part of the central protuberance. In the 70S ribosome it contacts protein S13 of the 30S subunit (bridge B1b), connecting the 2 subunits; this bridge is implicated in subunit movement. Contacts the P site tRNA; the 5S rRNA and some of its associated proteins might help stabilize positioning of ribosome-bound tRNAs. This Cereibacter sphaeroides (strain ATCC 17023 / DSM 158 / JCM 6121 / CCUG 31486 / LMG 2827 / NBRC 12203 / NCIMB 8253 / ATH 2.4.1.) (Rhodobacter sphaeroides) protein is Large ribosomal subunit protein uL5.